A 267-amino-acid polypeptide reads, in one-letter code: 4-hydroxy-tetrahydrodipicolinate reductase (267 aa).

8–13 is an NAD(+) binding site; it reads GAAGRM. Residue Arg35 participates in NADP(+) binding. Residues 98-100 and 122-125 contribute to the NAD(+) site; these read GTT and AANF. Residue His155 is the Proton donor/acceptor of the active site. A (S)-2,3,4,5-tetrahydrodipicolinate-binding site is contributed by His156. Catalysis depends on Lys159, which acts as the Proton donor. 165-166 provides a ligand contact to (S)-2,3,4,5-tetrahydrodipicolinate; the sequence is GT.

It belongs to the DapB family.

It localises to the cytoplasm. It carries out the reaction (S)-2,3,4,5-tetrahydrodipicolinate + NAD(+) + H2O = (2S,4S)-4-hydroxy-2,3,4,5-tetrahydrodipicolinate + NADH + H(+). The catalysed reaction is (S)-2,3,4,5-tetrahydrodipicolinate + NADP(+) + H2O = (2S,4S)-4-hydroxy-2,3,4,5-tetrahydrodipicolinate + NADPH + H(+). The protein operates within amino-acid biosynthesis; L-lysine biosynthesis via DAP pathway; (S)-tetrahydrodipicolinate from L-aspartate: step 4/4. Its function is as follows. Catalyzes the conversion of 4-hydroxy-tetrahydrodipicolinate (HTPA) to tetrahydrodipicolinate. The protein is 4-hydroxy-tetrahydrodipicolinate reductase of Azotobacter vinelandii (strain DJ / ATCC BAA-1303).